The primary structure comprises 148 residues: Putative pre-16S rRNA nuclease (148 aa).

This sequence belongs to the YqgF nuclease family.

The protein resides in the cytoplasm. In terms of biological role, could be a nuclease involved in processing of the 5'-end of pre-16S rRNA. The sequence is that of Putative pre-16S rRNA nuclease from Colwellia psychrerythraea (strain 34H / ATCC BAA-681) (Vibrio psychroerythus).